A 262-amino-acid polypeptide reads, in one-letter code: Cytochrome c oxidase subunit 3 (262 aa).

Helical transmembrane passes span 16-36 (PWPLTGAIGAMTTVTGLVQWF), 42-59 (TLFLLGNIITMLTMYQWW), 83-103 (GMILFIISEVFFFISFFWAFF), 128-148 (FQIPLLNTAILLASGVTVTWA), 163-183 (SLFFTVLLGIYFSILQAYEYI), 198-218 (FFVATGFHGLHVLIGTSFLLI), and 240-260 (AWYWHFVDVVWLFLYISIYWW).

It belongs to the cytochrome c oxidase subunit 3 family. Component of the cytochrome c oxidase (complex IV, CIV), a multisubunit enzyme composed of a catalytic core of 3 subunits and several supernumerary subunits. The complex exists as a monomer or a dimer and forms supercomplexes (SCs) in the inner mitochondrial membrane with ubiquinol-cytochrome c oxidoreductase (cytochrome b-c1 complex, complex III, CIII).

The protein resides in the mitochondrion inner membrane. It carries out the reaction 4 Fe(II)-[cytochrome c] + O2 + 8 H(+)(in) = 4 Fe(III)-[cytochrome c] + 2 H2O + 4 H(+)(out). Component of the cytochrome c oxidase, the last enzyme in the mitochondrial electron transport chain which drives oxidative phosphorylation. The respiratory chain contains 3 multisubunit complexes succinate dehydrogenase (complex II, CII), ubiquinol-cytochrome c oxidoreductase (cytochrome b-c1 complex, complex III, CIII) and cytochrome c oxidase (complex IV, CIV), that cooperate to transfer electrons derived from NADH and succinate to molecular oxygen, creating an electrochemical gradient over the inner membrane that drives transmembrane transport and the ATP synthase. Cytochrome c oxidase is the component of the respiratory chain that catalyzes the reduction of oxygen to water. Electrons originating from reduced cytochrome c in the intermembrane space (IMS) are transferred via the dinuclear copper A center (CU(A)) of subunit 2 and heme A of subunit 1 to the active site in subunit 1, a binuclear center (BNC) formed by heme A3 and copper B (CU(B)). The BNC reduces molecular oxygen to 2 water molecules using 4 electrons from cytochrome c in the IMS and 4 protons from the mitochondrial matrix. In Aedes aegypti (Yellowfever mosquito), this protein is Cytochrome c oxidase subunit 3.